Here is a 384-residue protein sequence, read N- to C-terminus: S-adenosylmethionine synthase (384 aa).

H16 contacts ATP. Residue D18 coordinates Mg(2+). E44 contacts K(+). L-methionine contacts are provided by E57 and Q100. The segment at 100 to 110 is flexible loop; it reads QSADIAMGVDE. Residues 165–167, D240, 246–247, A263, and K267 contribute to the ATP site; these read DAK and RK. D240 contacts L-methionine. Position 271 (K271) interacts with L-methionine.

This sequence belongs to the AdoMet synthase family. Homotetramer; dimer of dimers. It depends on Mg(2+) as a cofactor. K(+) serves as cofactor.

It localises to the cytoplasm. The enzyme catalyses L-methionine + ATP + H2O = S-adenosyl-L-methionine + phosphate + diphosphate. Its pathway is amino-acid biosynthesis; S-adenosyl-L-methionine biosynthesis; S-adenosyl-L-methionine from L-methionine: step 1/1. Catalyzes the formation of S-adenosylmethionine (AdoMet) from methionine and ATP. The overall synthetic reaction is composed of two sequential steps, AdoMet formation and the subsequent tripolyphosphate hydrolysis which occurs prior to release of AdoMet from the enzyme. The protein is S-adenosylmethionine synthase of Cellvibrio japonicus (strain Ueda107) (Pseudomonas fluorescens subsp. cellulosa).